An 896-amino-acid chain; its full sequence is Protein argonaute 9 (896 aa).

The PAZ domain occupies 267 to 380 (PVVDFLLANQ…FPIEFCNLVS (114 aa)). A Piwi domain is found at 550-857 (FLLCILAERK…AAAQMGTVMK (308 aa)).

It belongs to the argonaute family. Ago subfamily. Expressed in embryonic shoot apex region, pollen and developing ovules.

Involved in RNA-mediated post-transcriptional gene silencing (PTGS). Main component of the RNA-induced silencing complex (RISC) that binds to a short guide RNA such as a microRNA (miRNA) or small interfering RNA (siRNA). RISC uses the mature miRNA or siRNA as a guide for slicer-directed cleavage of homologous mRNAs to repress gene expression. Associates preferentially with small RNAs of 24 nucleotide in length with a 5' terminal adenosine. Interacts with 24 nucleotide sRNAs derived from transposable elements (TEs). Required to silence pericentrometric-located TEs in female gametes and their accessory cells. Necessary to inactivate a significant proportion of long terminal repeat retrotransposons (LTRs) in the ovule. Required to specify cell fate in ovule. Involved in the control of female gamete formation by restricting the specification of gametophyte precursors in a dosage-dependent, non-cell-autonomous manner. Targeted by turnip yellows virus (TuYV) protein P0 (via F-box-like domain) for probable proteasome degradation and thereby inactivating AGO9 function in RNA silencing. In Arabidopsis thaliana (Mouse-ear cress), this protein is Protein argonaute 9 (AGO9).